We begin with the raw amino-acid sequence, 270 residues long: Phosphatidylinositol transfer protein alpha isoform (270 aa).

Positions 58, 60, 85, 89, 96, and 194 each coordinate a 1,2-diacyl-sn-glycero-3-phospho-(1D-myo-inositol). Position 215 is an N6-acetyllysine (Lys215). The span at Thr250–Val263 shows a compositional bias: basic and acidic residues. Residues Thr250 to Asp270 form a disordered region.

It belongs to the PtdIns transfer protein family. PI transfer class I subfamily.

Its subcellular location is the cytoplasm. The protein localises to the nucleus. The catalysed reaction is a 1,2-diacyl-sn-glycero-3-phosphocholine(in) = a 1,2-diacyl-sn-glycero-3-phosphocholine(out). It catalyses the reaction a 1,2-diacyl-sn-glycero-3-phospho-(1D-myo-inositol)(in) = a 1,2-diacyl-sn-glycero-3-phospho-(1D-myo-inositol)(out). Phosphatidylinositol transfer activity is inhibited by N-ethylmaleimide. Functionally, catalyzes the transfer of phosphatidylinositol (PI) and phosphatidylcholine (PC) between membranes. Shows a preference for PI and PC containing shorter saturated or monosaturated acyl chains at the sn-1 and sn-2 positions. Preference order for PC is C16:1 &gt; C16:0 &gt; C18:1 &gt; C18:0 &gt; C20:4 and for PI is C16:1 &gt; C16:0 &gt; C18:1 &gt; C18:0 &gt; C20:4 &gt; C20:3. In Homo sapiens (Human), this protein is Phosphatidylinositol transfer protein alpha isoform (PITPNA).